Here is a 215-residue protein sequence, read N- to C-terminus: MSEAKRRAAEKAIEYVENDMIIGVGTGSTVAYFIDALGRTPKRIKGAVSSSEQSTAHLKQHGIEVLELNHTGTLPLYVDGADECDPYKRLIKGGGASLTREKIIAEASKQFICIIDPNKQVATLGKLPLPIEVIPMARSLVARQIMARTDGQPVWREGVITDNGNVILDVHHLRITDPVKLEQELNQIPGVVCVGLFARRCADLVIIGSEPPHIL.

Substrate contacts are provided by residues 26–29, 79–82, and 92–95; these read TGST, DGAD, and KGGG. E101 serves as the catalytic Proton acceptor. K119 provides a ligand contact to substrate.

Belongs to the ribose 5-phosphate isomerase family. Homodimer.

The catalysed reaction is aldehydo-D-ribose 5-phosphate = D-ribulose 5-phosphate. It participates in carbohydrate degradation; pentose phosphate pathway; D-ribose 5-phosphate from D-ribulose 5-phosphate (non-oxidative stage): step 1/1. In terms of biological role, catalyzes the reversible conversion of ribose-5-phosphate to ribulose 5-phosphate. In Xylella fastidiosa (strain 9a5c), this protein is Ribose-5-phosphate isomerase A.